We begin with the raw amino-acid sequence, 394 residues long: Tryptophan synthase beta chain (394 aa).

The residue at position 90 (Lys-90) is an N6-(pyridoxal phosphate)lysine.

The protein belongs to the TrpB family. Tetramer of two alpha and two beta chains. The cofactor is pyridoxal 5'-phosphate.

The catalysed reaction is (1S,2R)-1-C-(indol-3-yl)glycerol 3-phosphate + L-serine = D-glyceraldehyde 3-phosphate + L-tryptophan + H2O. It functions in the pathway amino-acid biosynthesis; L-tryptophan biosynthesis; L-tryptophan from chorismate: step 5/5. The beta subunit is responsible for the synthesis of L-tryptophan from indole and L-serine. In Bacteroides thetaiotaomicron (strain ATCC 29148 / DSM 2079 / JCM 5827 / CCUG 10774 / NCTC 10582 / VPI-5482 / E50), this protein is Tryptophan synthase beta chain.